The sequence spans 196 residues: Calcineurin B homologous protein 2 (196 aa).

G2 carries N-myristoyl glycine lipidation. 4 EF-hand domains span residues 26 to 61 (ASLL…AVNP), 71 to 106 (FPNG…PKQP), 111 to 146 (SRMN…MVGV), and 152 to 187 (QLES…MNIE). S27 carries the phosphoserine modification. Ca(2+)-binding residues include D124, D126, D128, K130, and E135. A Nuclear export signal motif is present at residues 137–148 (LQVLRLMVGVQV). D165, D167, D169, and E176 together coordinate Ca(2+).

The protein belongs to the calcineurin regulatory subunit family. CHP subfamily. In terms of assembly, interacts with PPP3CA. Interacts with SLC9A1/NHE1; the interaction occurs in a calcium-dependent manner. Interacts with SLC9A1/NHE1.

It is found in the cytoplasm. The protein localises to the nucleus. It localises to the cell membrane. Functions as an integral cofactor in cell pH regulation by controlling plasma membrane-type Na(+)/H(+) exchange activity. Binds to and activates SLC9A1/NHE1 in a serum-independent manner, thus increasing pH and protecting cells from serum deprivation-induced death. Also plays a role in the regulation of cell proliferation and tumor growth by increasing the phosphatase activity of PPP3CA in a calcium-dependent manner. Activator of the calcineurin/NFAT signaling pathway. Involved in the cytoplasmic translocation of the transcription factor NFATC3 to the nucleus. This chain is Calcineurin B homologous protein 2 (Chp2), found in Mus musculus (Mouse).